The chain runs to 222 residues: Small ribosomal subunit protein uS3 (222 aa).

Residues 39 to 109 enclose the KH type-2 domain; that stretch reads IRNFVKKKVY…NILINIVEVK (71 aa).

This sequence belongs to the universal ribosomal protein uS3 family. As to quaternary structure, part of the 30S ribosomal subunit. Forms a tight complex with proteins S10 and S14.

In terms of biological role, binds the lower part of the 30S subunit head. Binds mRNA in the 70S ribosome, positioning it for translation. The protein is Small ribosomal subunit protein uS3 of Clostridium tetani (strain Massachusetts / E88).